A 124-amino-acid chain; its full sequence is Ragulator complex protein LAMTOR3 (124 aa).

Residues 57 to 70 form a required for interaction with LAMTOR2 region; it reads TDQGSKLGLSKNKS.

It belongs to the LAMTOR3 family. As to quaternary structure, part of the Ragulator complex composed of LAMTOR1, LAMTOR2, LAMTOR3, LAMTOR4 and LAMTOR5. LAMTOR4 and LAMTOR5 form a heterodimer that interacts, through LAMTOR1, with a LAMTOR2, LAMTOR3 heterodimer. Interacts with LAMTOR1 and LAMTOR2; the interaction is direct. The Ragulator complex interacts with both the mTORC1 complex and heterodimers constituted of the Rag GTPases RagA/RRAGA, RagB/RRAGB, RagC/RRAGC and RagD/RRAGD; regulated by amino acid availability. The Ragulator complex interacts with SLC38A9; the probable amino acid sensor. Component of the lysosomal folliculin complex (LFC), composed of FLCN, FNIP1 (or FNIP2), RagA/RRAGA or RagB/RRAGB GDP-bound, RagC/RRAGC or RagD/RRAGD GTP-bound, and Ragulator. Interacts with MAP2K1/MEK1 and MAPK2. Interacts with MORG1.

It is found in the late endosome membrane. As part of the Ragulator complex it is involved in amino acid sensing and activation of mTORC1, a signaling complex promoting cell growth in response to growth factors, energy levels, and amino acids. Activated by amino acids through a mechanism involving the lysosomal V-ATPase, the Ragulator plays a dual role for the small GTPases Rag (RagA/RRAGA, RagB/RRAGB, RagC/RRAGC and/or RagD/RRAGD): it (1) acts as a guanine nucleotide exchange factor (GEF), activating the small GTPases Rag and (2) mediates recruitment of Rag GTPases to the lysosome membrane. Activated Ragulator and Rag GTPases function as a scaffold recruiting mTORC1 to lysosomes where it is in turn activated. Adapter protein that enhances the efficiency of the MAP kinase cascade facilitating the activation of MAPK2. The polypeptide is Ragulator complex protein LAMTOR3 (Homo sapiens (Human)).